The chain runs to 200 residues: dTTP/UTP pyrophosphatase (200 aa).

Asp72 serves as the catalytic Proton acceptor.

It belongs to the Maf family. YhdE subfamily. The cofactor is a divalent metal cation.

It is found in the cytoplasm. It carries out the reaction dTTP + H2O = dTMP + diphosphate + H(+). The enzyme catalyses UTP + H2O = UMP + diphosphate + H(+). Functionally, nucleoside triphosphate pyrophosphatase that hydrolyzes dTTP and UTP. May have a dual role in cell division arrest and in preventing the incorporation of modified nucleotides into cellular nucleic acids. In Pseudomonas savastanoi pv. phaseolicola (strain 1448A / Race 6) (Pseudomonas syringae pv. phaseolicola (strain 1448A / Race 6)), this protein is dTTP/UTP pyrophosphatase.